Here is a 511-residue protein sequence, read N- to C-terminus: Cytochrome P450 93B2 (511 aa).

The chain crosses the membrane as a helical span at residues 4–24 (LQLIFLLFFFPTLLFLYCLPY). Position 447 (Cys447) interacts with heme.

This sequence belongs to the cytochrome P450 family. Heme serves as cofactor.

Its subcellular location is the membrane. The enzyme catalyses a flavanone + reduced [NADPH--hemoprotein reductase] + O2 = a flavone + oxidized [NADPH--hemoprotein reductase] + 2 H2O + H(+). It functions in the pathway secondary metabolite biosynthesis; flavonoid biosynthesis. In terms of biological role, functions as a flavone synthase II (FNSII) that catalyzes the direct conversion of flavanones to flavones. In vitro, can convert liquiritigenin, naringenin and eriodictyol to 7,4'-dihydroxyflavone, apigenin and luteolin, respectively. The sequence is that of Cytochrome P450 93B2 from Gerbera hybrida (Daisy).